The chain runs to 233 residues: Putative nosiheptide resistance regulatory protein (233 aa).

Positions 93 to 112 form a DNA-binding region, H-T-H motif; it reads RKAARQAADYSRPMIEQAVA. The disordered stretch occupies residues 190-233; the sequence is PPEATEVPESGRLTSVDGSAEAVLDPEVQAKEAAEEAAKRDDQA. The span at 217 to 233 shows a compositional bias: basic and acidic residues; it reads VQAKEAAEEAAKRDDQA.

In terms of biological role, seems to be involved in the regulation of nhs expression. The sequence is that of Putative nosiheptide resistance regulatory protein from Streptomyces actuosus.